We begin with the raw amino-acid sequence, 947 residues long: MLDKTYDSAAVEPKIAKAWDEADAFRAGVNAKPDAETFTIVIPPPNVTGSLHMGHALNNTLQDIMVRFERMRGKDVLWQPGMDHAGIATQMVVERQLMERQLPSRRDMGREAFIERVWEWKAESGGLIFNQLKRLGASCDWSRERFTMDEGLSEAVIEVFVSLYKEGLIYRDTRLVNWDPKLQTAISDIEVEPVEVNGHLWHLRYPLEEGVTYQHPVAFDEDGNATEWETRNYLVVATTRPETMLGDTGVAVHPDDVRYKGIVGKHVILPIVGRRIPIVADEYPDPTTGTGAVKMTPAHDFNDFDVGKRQGLRQVNVLTADGRITIKNNEDFLEGLDHPAALHGAWDRLEGKDRFEARKLIVEMLEEAGLVDHIEPHKHMVPHGDRGGVPIEPRLTEQWYVDAKTLAKPAIAAVKEGRTNFVPKNWEKTFFEWMENIQPWCISRQLWWGHQIPAWYGPDGQIFVERNEEEALHAAIQHYIAHEGPMKAYVEDLLENFKPGEILTRDEDVLDTWFSSALWPFSTLGWPKETPELDKYYQTDVLVTGFDIIFFWVARMMMMGLHFMKDADGTPVEPFHTVYVHALVRDKNGQKMSKSKGNVIDPLELIDEYGADALRFTLAIMAAQGRDVKLDPARIAGYRNFGTKLWNATRFAEMNGAISSEGFIPEAASLTINRWILTELSRTIRDVSEAIEDYRFNEAAGALYRFVWNQFCDWYLELLKPVFNGDDEAAKRESQACTAYVLDEIYKLLHPFMPFMTEELWEKTTGPGRERTTLLCHAEWPAAFYADDAAADEINWLIDLVSGIRSVRAEMNVPPAAMAPLVIVGAKALTSERLDRHASAIKRLARVENIEHASVAPRGSAQIVVGEATACLPLGSLIDLGAEKLRLEKAIAKVDVERERILGKLANEKFVANAKPELVEAERERLVELDLQRDSLGVALSRVSEAG.

Residues P45–H55 carry the 'HIGH' region motif. Positions K591 to S595 match the 'KMSKS' region motif. K594 lines the ATP pocket.

This sequence belongs to the class-I aminoacyl-tRNA synthetase family. ValS type 1 subfamily. In terms of assembly, monomer.

Its subcellular location is the cytoplasm. It carries out the reaction tRNA(Val) + L-valine + ATP = L-valyl-tRNA(Val) + AMP + diphosphate. Catalyzes the attachment of valine to tRNA(Val). As ValRS can inadvertently accommodate and process structurally similar amino acids such as threonine, to avoid such errors, it has a 'posttransfer' editing activity that hydrolyzes mischarged Thr-tRNA(Val) in a tRNA-dependent manner. The sequence is that of Valine--tRNA ligase from Rhizobium meliloti (strain 1021) (Ensifer meliloti).